The chain runs to 505 residues: Neuronal acetylcholine receptor subunit alpha-3 (505 aa).

Positions 1–31 are cleaved as a signal peptide; the sequence is MGSGPLSLPLALSPPRLLLLLLLSLLPVARA. Residues 32–250 lie on the Extracellular side of the membrane; it reads SEAEHRLFER…PLFYTINLII (219 aa). 2 N-linked (GlcNAc...) asparagine glycosylation sites follow: Asn55 and Asn172. 2 disulfides stabilise this stretch: Cys159–Cys173 and Cys223–Cys224. Residues 251–266 traverse the membrane as a helical segment; that stretch reads PCLLISFLTVLVFYLP. Residues 267-268 are Cytoplasmic-facing; sequence SD. The helical transmembrane segment at 269–285 threads the bilayer; sequence CGEKVTLCISVLLSLTV. Over 286-307 the chain is Extracellular; the sequence is FLLVITETIPSTSLVIPLIGEY. The chain crosses the membrane as a helical span at residues 308 to 326; that stretch reads LLFTMIFVTLSIVITVFVL. Residues 327-474 are Cytoplasmic-facing; the sequence is NVHYRTPTTH…QDDWKYVAMV (148 aa). Ser413 and Ser416 each carry phosphoserine. Residues 475 to 493 traverse the membrane as a helical segment; that stretch reads IDRIFLWVFTLVCILGTAG. The Extracellular segment spans residues 494–505; that stretch reads LFLQPLMAREDA.

Belongs to the ligand-gated ion channel (TC 1.A.9) family. Acetylcholine receptor (TC 1.A.9.1) subfamily. Alpha-3/CHRNA3 sub-subfamily. In terms of assembly, neuronal AChR is composed of two different types of subunits: alpha and beta. CHRNA3/Alpha-3 subunit can be combined to CHRNA5/alpha-5, CHRNB2/beta-2 CHRNB3/beta-3 or CHRNB4/beta-4 to give rise to functional receptors. Forms stoichiometries such as (CHRNA3)2:(CHRNB4)3 or (CHRNA3:CHRNB4)2:CHRNB3. Part of a complex composed of STUB1/CHIP, VCP/p97, CHRNA3, and UBXN2A that modulates the ubiquitination and endoplasmic reticulum-associated degradation (ERAD) of CHRNA3. Within the complex UBXN2A acts as a scaffold protein required for the interaction of CHRNA3 with VCP/p97, this interaction also inhibits CHRNA3 ubiquitination by STUB1/CHIP and subsequently ERAD. Interacts with UBXN2A (via SEP domain), the interaction is required for the interaction of CHRNA3 in the STUB1:VCP:UBXN2A complex. Interacts with RIC3; which is required for proper folding and assembly. Interacts with LYPD6. In terms of processing, ubiquitinated; by STUB1/CHIP and thereafter degraded by the 26S proteosome complex.

It is found in the synaptic cell membrane. The protein resides in the cell membrane. It localises to the endoplasmic reticulum. Its subcellular location is the golgi apparatus. It catalyses the reaction Ca(2+)(in) = Ca(2+)(out). The catalysed reaction is K(+)(in) = K(+)(out). It carries out the reaction Na(+)(in) = Na(+)(out). Activated by a myriad of ligands such as acetylcholine, cytisine, nicotine, choline and epibatidine. The heteropentamer CHRNA3:CHRNB2 activity is blocked by alpha-conotoxins ImI, ImII, PnIA, GID and MII. The heteropentamer CHRNA3:CHRNB4 activity is blocked by the alpha-conotoxin ImI and AuIB. In terms of biological role, component of neuronal acetylcholine receptors (nAChRs) that function as pentameric, ligand-gated cation channels with high calcium permeability among other activities. nAChRs are excitatory neurotrasnmitter receptors formed by a collection of nAChR subunits known to mediate synaptic transmission in the nervous system and the neuromuscular junction. Each nAchR subunit confers differential attributes to channel properties, including activation, deactivation and desensitization kinetics, pH sensitivity, cation permeability, and binding to allosteric modulators. CHRNA3 forms heteropentameric neuronal acetylcholine receptors with CHRNB2 and CHRNB4, with CHRNA5, and CHRNB3 as accesory subunits. CHRNA3:CHRNB4 being predominant in neurons of the autonomic ganglia, it is known as ganglionic nicotinic receptor. CHRNA3:CHRNB4 or CHRNA3:CHRNA5:CHRNB4 play also an important role in the habenulo-interpeduncular tract, modulating the mesolimbic dopamine system and affecting reward circuits and addiction. Hypothalamic CHRNA3:CHRNB4 nAChR activation by nicotine leads to activation of POMC neurons and a decrease in food intake. Also expressed in the urothelium where it modulates reflex bladder activity by increasing intracellular calcium through extracellular influx and basal ATP release. The chain is Neuronal acetylcholine receptor subunit alpha-3 from Homo sapiens (Human).